Reading from the N-terminus, the 300-residue chain is Porphobilinogen deaminase (300 aa).

Position 239 is an S-(dipyrrolylmethanemethyl)cysteine (cysteine 239).

Belongs to the HMBS family. As to quaternary structure, monomer. Requires dipyrromethane as cofactor.

It catalyses the reaction 4 porphobilinogen + H2O = hydroxymethylbilane + 4 NH4(+). It participates in porphyrin-containing compound metabolism; protoporphyrin-IX biosynthesis; coproporphyrinogen-III from 5-aminolevulinate: step 2/4. In terms of biological role, tetrapolymerization of the monopyrrole PBG into the hydroxymethylbilane pre-uroporphyrinogen in several discrete steps. In Francisella tularensis subsp. novicida (strain U112), this protein is Porphobilinogen deaminase.